A 915-amino-acid chain; its full sequence is Pentatricopeptide repeat-containing protein At5g65560 (915 aa).

20 PPR repeats span residues 182–216 (IIGC…KVCP), 217–251 (NIYT…GLDP), 252–286 (DFFT…GCRR), 287–321 (NEVA…ECFP), 322–356 (TVRT…GIKP), 357–391 (NIHT…GLMP), 392–426 (NVIT…KLSP), 427–460 (NTRT…KVLP), 461–495 (DVVT…GLVP), 496–530 (DQWT…GVNP), 531–565 (NVVM…NCLP), 566–600 (NSLT…GLQP), 601–635 (TVST…GTKP), 636–670 (DAHT…GVSP), 671–705 (DLFT…GCEP), 724–758 (KQKG…SVTP), 759–794 (NAKS…GISP), 795–829 (SELV…GHLP), 830–864 (QLES…GYYE), and 865–899 (DELA…GCKF).

The protein belongs to the PPR family. P subfamily.

In Arabidopsis thaliana (Mouse-ear cress), this protein is Pentatricopeptide repeat-containing protein At5g65560.